The sequence spans 509 residues: Subtelomeric hrmA-associated cluster protein AFUA_5G14880 (509 aa).

Its function is as follows. Part of the subtelomeric hrmA-associated cluster (HAC) containing genes that alter the hyphal surface (such as reduced total chitin or increased beta-glucan exposure) and perturb inter-hyphal interactions within the developing biofilms, resulting in a loss of vertically aligned polarized growing filaments. Consequently, this hypoxia-typic morphotype (called H-MORPH) with altered biofilm architecture leads to increased hypoxia fitness, increased host inflammation, rapid disease progression, and mortality in a murine model of invasive aspergillosis. In Aspergillus fumigatus (strain ATCC MYA-4609 / CBS 101355 / FGSC A1100 / Af293) (Neosartorya fumigata), this protein is Subtelomeric hrmA-associated cluster protein AFUA_5G14880.